The following is a 196-amino-acid chain: dTTP/UTP pyrophosphatase (196 aa).

Aspartate 72 acts as the Proton acceptor in catalysis.

Belongs to the Maf family. YhdE subfamily. A divalent metal cation is required as a cofactor.

It is found in the cytoplasm. The catalysed reaction is dTTP + H2O = dTMP + diphosphate + H(+). It catalyses the reaction UTP + H2O = UMP + diphosphate + H(+). Nucleoside triphosphate pyrophosphatase that hydrolyzes dTTP and UTP. May have a dual role in cell division arrest and in preventing the incorporation of modified nucleotides into cellular nucleic acids. The polypeptide is dTTP/UTP pyrophosphatase (Chlamydia caviae (strain ATCC VR-813 / DSM 19441 / 03DC25 / GPIC) (Chlamydophila caviae)).